Here is a 400-residue protein sequence, read N- to C-terminus: Tryptophan synthase beta chain (400 aa).

Residue Lys95 is modified to N6-(pyridoxal phosphate)lysine.

It belongs to the TrpB family. In terms of assembly, tetramer of two alpha and two beta chains. Pyridoxal 5'-phosphate serves as cofactor.

The enzyme catalyses (1S,2R)-1-C-(indol-3-yl)glycerol 3-phosphate + L-serine = D-glyceraldehyde 3-phosphate + L-tryptophan + H2O. It functions in the pathway amino-acid biosynthesis; L-tryptophan biosynthesis; L-tryptophan from chorismate: step 5/5. Functionally, the beta subunit is responsible for the synthesis of L-tryptophan from indole and L-serine. The sequence is that of Tryptophan synthase beta chain from Chlorobaculum tepidum (strain ATCC 49652 / DSM 12025 / NBRC 103806 / TLS) (Chlorobium tepidum).